A 652-amino-acid chain; its full sequence is DNA ligase (652 aa).

Residues 29 to 33, 78 to 79, and E107 contribute to the NAD(+) site; these read DSDYD and SL. The N6-AMP-lysine intermediate role is filled by K109. The NAD(+) site is built by R130, E164, K278, and K302. Residues C395, C398, C413, and C418 each contribute to the Zn(2+) site. One can recognise a BRCT domain in the interval 577-652; that stretch reads NSDAALFGLT…IEDEDWLRKL (76 aa).

Belongs to the NAD-dependent DNA ligase family. LigA subfamily. Mg(2+) serves as cofactor. Mn(2+) is required as a cofactor.

The catalysed reaction is NAD(+) + (deoxyribonucleotide)n-3'-hydroxyl + 5'-phospho-(deoxyribonucleotide)m = (deoxyribonucleotide)n+m + AMP + beta-nicotinamide D-nucleotide.. In terms of biological role, DNA ligase that catalyzes the formation of phosphodiester linkages between 5'-phosphoryl and 3'-hydroxyl groups in double-stranded DNA using NAD as a coenzyme and as the energy source for the reaction. It is essential for DNA replication and repair of damaged DNA. This is DNA ligase from Streptococcus pyogenes serotype M18 (strain MGAS8232).